A 966-amino-acid chain; its full sequence is Phosphoenolpyruvate carboxylase (966 aa).

Residue Ser-10 is modified to Phosphoserine. Residues His-171 and Lys-601 contribute to the active site.

This sequence belongs to the PEPCase type 1 family. In terms of assembly, homotetramer. Mg(2+) serves as cofactor.

It is found in the cytoplasm. The enzyme catalyses oxaloacetate + phosphate = phosphoenolpyruvate + hydrogencarbonate. With respect to regulation, by light-reversible phosphorylation. Through the carboxylation of phosphoenolpyruvate (PEP) it forms oxaloacetate, a four-carbon dicarboxylic acid source for the tricarboxylic acid cycle. The chain is Phosphoenolpyruvate carboxylase (PEPC) from Medicago sativa (Alfalfa).